Reading from the N-terminus, the 459-residue chain is ATP-dependent protease ATPase subunit HslU (459 aa).

Residues valine 26, 68 to 73 (GVGKTE), aspartate 271, glutamate 337, and arginine 409 contribute to the ATP site.

It belongs to the ClpX chaperone family. HslU subfamily. A double ring-shaped homohexamer of HslV is capped on each side by a ring-shaped HslU homohexamer. The assembly of the HslU/HslV complex is dependent on binding of ATP.

The protein localises to the cytoplasm. Its function is as follows. ATPase subunit of a proteasome-like degradation complex; this subunit has chaperone activity. The binding of ATP and its subsequent hydrolysis by HslU are essential for unfolding of protein substrates subsequently hydrolyzed by HslV. HslU recognizes the N-terminal part of its protein substrates and unfolds these before they are guided to HslV for hydrolysis. The chain is ATP-dependent protease ATPase subunit HslU from Xylella fastidiosa (strain M23).